The chain runs to 279 residues: Sulfur carrier protein FdhD (279 aa).

Catalysis depends on cysteine 122, which acts as the Cysteine persulfide intermediate.

This sequence belongs to the FdhD family.

It localises to the cytoplasm. Functionally, required for formate dehydrogenase (FDH) activity. Acts as a sulfur carrier protein that transfers sulfur from IscS to the molybdenum cofactor prior to its insertion into FDH. This chain is Sulfur carrier protein FdhD, found in Thermoplasma volcanium (strain ATCC 51530 / DSM 4299 / JCM 9571 / NBRC 15438 / GSS1).